The chain runs to 914 residues: Zinc finger protein 717 (914 aa).

The 72-residue stretch at 22 to 93 folds into the KRAB domain; the sequence is VSFEEVAVHF…EETPNLRLSA (72 aa). A C2H2-type 1; degenerate zinc finger spans residues 209–231; that stretch reads FQCNEQGKTFNTEAMFFIHKRVH. The C2H2-type 2; degenerate zinc finger occupies 266–277; the sequence is RKSDFTKHQQTH. The segment at 283-305 adopts a C2H2-type 3; degenerate zinc-finger fold; it reads YECVECEKPSISKSDLMLQCKMP. C2H2-type zinc fingers lie at residues 311–333, 339–361, 367–389, 395–417, 423–445, 451–473, 479–501, 507–529, 535–557, 563–585, 591–613, and 619–641; these read YACN…QRIH, YGCN…ERTH, YKCI…HRTH, YQCS…HRTH, YACD…QRTH, YECN…QRTH, YECN…QWTH, YACN…HRTH, YECN…KRTH, and YECN…QGTH. The C2H2-type 16; degenerate zinc finger occupies 649-669; that stretch reads CNECGKTFHRKSFLTIHQRTH. A C2H2-type 17; degenerate zinc finger spans residues 741-752; that stretch reads QKSVLTVHHRTH. 5 consecutive C2H2-type zinc fingers follow at residues 758–780, 786–808, 814–836, 842–864, and 870–892; these read YECN…QGTH, YECD…QRTH, FECK…HRTH, FRCN…QRTH, and YECK…QQTH.

It belongs to the krueppel C2H2-type zinc-finger protein family.

The protein resides in the nucleus. Its function is as follows. May be involved in transcriptional regulation. The sequence is that of Zinc finger protein 717 from Homo sapiens (Human).